The sequence spans 308 residues: MAHKSKILIIGGTGYIGKFIVEASAKSGHPTFALVRESTVSDPVKGKLVEKFKGLGVTLLHGDLYDHESLVKAFKQVDVVISTVGHLQLADQVKIIAAIKEAGNIKRFFPSEFGNDVDRVHAVEPAKTAFATKAEIRRKTEAEGIPYTYVSSNFFAGYFLPTLAQPGLTSPPREKVVIFGDGNARAVFNKEDDIGTYTIRAVDDPRTLNKIVYIKPAKNIYSFNEIVALWEKKIGKTLEKIYVPEEKLLKDIQESPIPINVILAINHSVFVKGDHTNFEIEASFGVEASELYPDVKYTTVEEYLQQFV.

NADP(+) contacts are provided by residues 11–17, Arg-36, and Lys-45; that span reads GGTGYIG. Catalysis depends on Lys-133, which acts as the Proton acceptor. Position 137 (Arg-137) interacts with NADP(+).

This sequence belongs to the NmrA-type oxidoreductase family. Isoflavone reductase subfamily.

The enzyme catalyses (-)-dehydrodiconiferyl alcohol + NADPH + H(+) = (S)-isodihydrodehydrodiconiferyl alcohol + NADP(+). It catalyses the reaction (+)-dehydrodiconiferyl alcohol + NADPH + H(+) = (R)-isodihydrodehydrodiconiferyl alcohol + NADP(+). Functionally, oxidoreductase involved in lignan biosynthesis. Catalyzes the NADPH-dependent reduction of phenylcoumaran benzylic ethers. Converts dehydrodiconiferyl alcohol (DDC) to isodihydrodehydrodiconiferyl alcohol (IDDDC). The polypeptide is Phenylcoumaran benzylic ether reductase Betv6 (Betula pendula (European white birch)).